The primary structure comprises 159 residues: SsrA-binding protein (159 aa).

The protein belongs to the SmpB family.

The protein resides in the cytoplasm. In terms of biological role, required for rescue of stalled ribosomes mediated by trans-translation. Binds to transfer-messenger RNA (tmRNA), required for stable association of tmRNA with ribosomes. tmRNA and SmpB together mimic tRNA shape, replacing the anticodon stem-loop with SmpB. tmRNA is encoded by the ssrA gene; the 2 termini fold to resemble tRNA(Ala) and it encodes a 'tag peptide', a short internal open reading frame. During trans-translation Ala-aminoacylated tmRNA acts like a tRNA, entering the A-site of stalled ribosomes, displacing the stalled mRNA. The ribosome then switches to translate the ORF on the tmRNA; the nascent peptide is terminated with the 'tag peptide' encoded by the tmRNA and targeted for degradation. The ribosome is freed to recommence translation, which seems to be the essential function of trans-translation. This is SsrA-binding protein from Salinispora tropica (strain ATCC BAA-916 / DSM 44818 / JCM 13857 / NBRC 105044 / CNB-440).